The chain runs to 212 residues: MSSIDKTQRITQSDALPGRSTPMPVARLHVVHEHSMTHVPDHMSVAIFAMGCFWGVERLFWQQPGIYSTAAGYIGGYTPNPTYREVCSGQTDHAEAVRVVFDPAVISYDQLLQLFWENHDPAQGMRQGGDIGSQYRSAIYTLTPEQEQAAQESLQRFQQAMREKGDVRAISTEIVPAGPFYYAEDDHQQYLYKNPNGYCGLGGIGVCLPPPR.

Residues 1–14 are compositionally biased toward polar residues; the sequence is MSSIDKTQRITQSD. A disordered region spans residues 1-21; sequence MSSIDKTQRITQSDALPGRST. Residue cysteine 52 is part of the active site.

It belongs to the MsrA Met sulfoxide reductase family.

The enzyme catalyses L-methionyl-[protein] + [thioredoxin]-disulfide + H2O = L-methionyl-(S)-S-oxide-[protein] + [thioredoxin]-dithiol. It carries out the reaction [thioredoxin]-disulfide + L-methionine + H2O = L-methionine (S)-S-oxide + [thioredoxin]-dithiol. Its function is as follows. Has an important function as a repair enzyme for proteins that have been inactivated by oxidation. Catalyzes the reversible oxidation-reduction of methionine sulfoxide in proteins to methionine. The polypeptide is Peptide methionine sulfoxide reductase MsrA (Pectobacterium carotovorum subsp. carotovorum (strain PC1)).